A 594-amino-acid chain; its full sequence is UvrABC system protein C (594 aa).

The 78-residue stretch at 14–91 folds into the GIY-YIG domain; it reads DQPGCYLMKD…IKKHDPKYNI (78 aa). The 36-residue stretch at 196–231 folds into the UVR domain; the sequence is KEVRSELETKMYEASEKLEFERAKELRDQIAHIDAI.

This sequence belongs to the UvrC family. As to quaternary structure, interacts with UvrB in an incision complex.

It localises to the cytoplasm. In terms of biological role, the UvrABC repair system catalyzes the recognition and processing of DNA lesions. UvrC both incises the 5' and 3' sides of the lesion. The N-terminal half is responsible for the 3' incision and the C-terminal half is responsible for the 5' incision. This chain is UvrABC system protein C, found in Bacillus anthracis (strain A0248).